Here is a 72-residue protein sequence, read N- to C-terminus: Small ribosomal subunit protein bS18c (72 aa).

This sequence belongs to the bacterial ribosomal protein bS18 family. In terms of assembly, part of the 30S ribosomal subunit.

Its subcellular location is the plastid. The protein localises to the chloroplast. The chain is Small ribosomal subunit protein bS18c from Thalassiosira pseudonana (Marine diatom).